The primary structure comprises 189 residues: Probable nicotinate-nucleotide adenylyltransferase (189 aa).

Belongs to the NadD family.

It carries out the reaction nicotinate beta-D-ribonucleotide + ATP + H(+) = deamido-NAD(+) + diphosphate. It functions in the pathway cofactor biosynthesis; NAD(+) biosynthesis; deamido-NAD(+) from nicotinate D-ribonucleotide: step 1/1. Catalyzes the reversible adenylation of nicotinate mononucleotide (NaMN) to nicotinic acid adenine dinucleotide (NaAD). The sequence is that of Probable nicotinate-nucleotide adenylyltransferase from Staphylococcus aureus (strain MRSA252).